A 336-amino-acid polypeptide reads, in one-letter code: WAT1-related protein At2g37450 (336 aa).

A run of 9 helical transmembrane segments spans residues 7–27, 45–65, 79–99, 115–135, 160–180, 189–209, 227–247, 255–275, and 279–299; these read ALPF…DILT, HGVA…PVIA, TFAI…ALIF, VVGT…KGPA, GAVL…LQAI, LSLA…VALV, LTIT…GGVV, FVTA…SIIF, and MYLG…LVIW. 2 consecutive EamA domains span residues 63–126 and 169–298; these read VIAQ…GGIM and FSYA…YLVI.

The protein belongs to the drug/metabolite transporter (DMT) superfamily. Plant drug/metabolite exporter (P-DME) (TC 2.A.7.4) family.

The protein localises to the membrane. The protein is WAT1-related protein At2g37450 of Arabidopsis thaliana (Mouse-ear cress).